The primary structure comprises 299 residues: Protoheme IX farnesyltransferase (299 aa).

Helical transmembrane passes span 17–37 (VVAL…PAPY), 41–61 (GLLV…AAVF), 91–111 (ALMW…LFVN), 113–133 (ITMV…TLYL), 141–161 (IVIG…AVSG), 168–188 (ACLL…ALAI), 207–227 (GLAY…LVSL), 228–248 (LPYL…ALGI), and 266–286 (IAWC…VTLL).

It belongs to the UbiA prenyltransferase family. Protoheme IX farnesyltransferase subfamily.

It is found in the cell inner membrane. It catalyses the reaction heme b + (2E,6E)-farnesyl diphosphate + H2O = Fe(II)-heme o + diphosphate. The protein operates within porphyrin-containing compound metabolism; heme O biosynthesis; heme O from protoheme: step 1/1. Converts heme B (protoheme IX) to heme O by substitution of the vinyl group on carbon 2 of heme B porphyrin ring with a hydroxyethyl farnesyl side group. This is Protoheme IX farnesyltransferase from Ruthia magnifica subsp. Calyptogena magnifica.